The following is a 382-amino-acid chain: Biotin synthase (382 aa).

The Radical SAM core domain occupies 83-318 (CCGNVVDLCS…EQILRYAGGR (236 aa)). The [4Fe-4S] cluster site is built by Cys-101, Cys-105, and Cys-108. 4 residues coordinate [2Fe-2S] cluster: Cys-146, Cys-183, Cys-243, and Arg-313.

It belongs to the radical SAM superfamily. Biotin synthase family. As to quaternary structure, homodimer. Requires [4Fe-4S] cluster as cofactor. It depends on [2Fe-2S] cluster as a cofactor.

The catalysed reaction is (4R,5S)-dethiobiotin + (sulfur carrier)-SH + 2 reduced [2Fe-2S]-[ferredoxin] + 2 S-adenosyl-L-methionine = (sulfur carrier)-H + biotin + 2 5'-deoxyadenosine + 2 L-methionine + 2 oxidized [2Fe-2S]-[ferredoxin]. It functions in the pathway cofactor biosynthesis; biotin biosynthesis; biotin from 7,8-diaminononanoate: step 2/2. Functionally, catalyzes the conversion of dethiobiotin (DTB) to biotin by the insertion of a sulfur atom into dethiobiotin via a radical-based mechanism. This Crocosphaera subtropica (strain ATCC 51142 / BH68) (Cyanothece sp. (strain ATCC 51142)) protein is Biotin synthase.